The primary structure comprises 1114 residues: Transcriptional repressor NF-X1 (1114 aa).

The segment at 9 to 26 (GTFKFNTDAAEFIPQERK) is interaction with PABPC1 and PABC4. Disordered stretches follow at residues 20–220 (FIPQ…CRKP), 232–287 (QRRY…PTKS), and 299–325 (KSSR…FPRG). Phosphoserine is present on residues serine 50, serine 81, serine 92, serine 126, serine 130, and serine 147. Composition is skewed to polar residues over residues 72-103 (SYAS…NQPW) and 121-142 (LSEQ…SGTN). Basic and acidic residues-rich tracts occupy residues 143-156 (PREH…KEVV), 185-202 (LRSE…DENT), 232-248 (QRRY…EGAR), and 304-315 (VNQEKTAVRRQD). Serine 320 is subject to Phosphoserine. The RING-type; atypical zinc-finger motif lies at 352 to 403 (CMVCCELVQVTAPVWSCQSCFHVFHLNCIKKWARSPASHADGQSGWRCPACQ). 8 NF-X1-type zinc fingers span residues 447-465 (CPHS…PCPA), 500-519 (CGQH…PCRI), 561-580 (CGSH…PCPR), 626-649 (CGSS…PCSR), 688-707 (CGRH…KCPL), 715-734 (CGLH…TCWQ), 826-848 (CGMH…ACKQ), and 857-878 (CGHP…ACKA). The R3H domain maps to 988–1056 (LKFVSDVEKE…KRNVVVTAVR (69 aa)). The segment at 1071–1095 (ERETQTRPPPPIPHHRHQADKAPGS) is disordered.

Belongs to the NFX1 family. Interacts with PABPC1 and PABPC4. As to expression, ubiquitously expressed, with highest levels in thymus.

Its subcellular location is the nucleus. Its function is as follows. Binds to the X-box motif of MHC class II genes and represses their expression. May play an important role in regulating the duration of an inflammatory response by limiting the period in which MHC class II molecules are induced by interferon-gamma. Together with PABPC1 or PABPC4, acts as a coactivator for TERT expression. Mediates E2-dependent ubiquitination. The polypeptide is Transcriptional repressor NF-X1 (Nfx1) (Mus musculus (Mouse)).